A 954-amino-acid chain; its full sequence is Xylanolytic transcriptional activator xlnR (954 aa).

2 disordered regions span residues 1 to 39 and 51 to 93; these read MSTT…LAEG and REAA…SQRD. Residues 8–21 are compositionally biased toward low complexity; the sequence is HFPHSYSPFSSSRS. The segment covering 22–33 has biased composition (polar residues); the sequence is LNRMAQSQTSGL. Basic and acidic residues predominate over residues 64 to 78; the sequence is GKPKDQFQVDNDNHH. Residues 82–91 show a composition bias toward polar residues; that stretch reads SLSNFKNPSQ. The segment at residues 119–145 is a DNA-binding region (zn(2)-C6 fungal-type); it reads CDQCNQLRTKCDGQNPCAHCIDFGLTC. 4 disordered regions span residues 173 to 226, 310 to 333, 566 to 607, and 758 to 777; these read ATNS…HSEA, LMNP…TENP, ELPP…PGNT, and MDGS…STVE. Polar residues predominate over residues 174–183; the sequence is TNSGQPNGSS. Residues 574–590 show a composition bias toward basic and acidic residues; that stretch reads ARPDAERDGDPDADLSK. Residues 764-777 show a composition bias toward polar residues; it reads NHVSPSGRSSSTVE.

The protein belongs to the xlnR/xlr1 family.

The protein resides in the nucleus. Functionally, transcriptional activator of the xylanolytic system. Involved in the regulation of extracellular cellulolytic and xylanolytic genes and in the regulation of the intracellular activities of D-xylose catabolic genes in the pentose catabolic pathway (PCP) in response to the presence of D-xylose. This chain is Xylanolytic transcriptional activator xlnR (xlnR), found in Aspergillus fumigatus (strain ATCC MYA-4609 / CBS 101355 / FGSC A1100 / Af293) (Neosartorya fumigata).